Here is a 493-residue protein sequence, read N- to C-terminus: 3-octaprenyl-4-hydroxybenzoate carboxy-lyase (493 aa).

N172 is a binding site for Mn(2+). Residues 175 to 177 (IYR), 189 to 191 (RWL), and 194 to 195 (RG) contribute to the prenylated FMN site. E238 is a Mn(2+) binding site. D287 acts as the Proton donor in catalysis.

Belongs to the UbiD family. In terms of assembly, homohexamer. Prenylated FMN is required as a cofactor. The cofactor is Mn(2+).

It localises to the cell membrane. It carries out the reaction a 4-hydroxy-3-(all-trans-polyprenyl)benzoate + H(+) = a 2-(all-trans-polyprenyl)phenol + CO2. It participates in cofactor biosynthesis; ubiquinone biosynthesis. Catalyzes the decarboxylation of 3-octaprenyl-4-hydroxy benzoate to 2-octaprenylphenol, an intermediate step in ubiquinone biosynthesis. The sequence is that of 3-octaprenyl-4-hydroxybenzoate carboxy-lyase from Shewanella baltica (strain OS155 / ATCC BAA-1091).